Here is a 364-residue protein sequence, read N- to C-terminus: Pre-small/secreted glycoprotein (364 aa).

An N-terminal signal peptide occupies residues 1–32 (MGVTGILQLPRDRFKRTSFFLWVIILFQRTFS). Asn-40 carries N-linked (GlcNAc...) asparagine; by host glycosylation. Disulfide bonds link Cys-108–Cys-135 and Cys-121–Cys-147. N-linked (GlcNAc...) asparagine; by host glycosylation is found at Asn-204, Asn-228, Asn-238, Asn-257, and Asn-268.

This sequence belongs to the filoviruses glycoprotein family. Homodimer; disulfide-linked. The homodimers are linked by two disulfide bonds in a parallel orientation. As to quaternary structure, monomer. This precursor is processed into mature sGP and delta-peptide by host furin or furin-like proteases. The cleavage site corresponds to the furin optimal cleavage sequence [KR]-X-[KR]-R. Post-translationally, N-glycosylated. In terms of processing, O-glycosylated.

It is found in the secreted. Its function is as follows. Seems to possess an anti-inflammatory activity as it can reverse the barrier-decreasing effects of TNF alpha. Might therefore contribute to the lack of inflammatory reaction seen during infection in spite the of extensive necrosis and massive virus production. Does not seem to be involved in activation of primary macrophages. Does not seem to interact specifically with neutrophils. Viroporin that permeabilizes mammalian cell plasma membranes. It acts by altering permeation of ionic compounds and small molecules. This activity may lead to viral enterotoxic activity. This is Pre-small/secreted glycoprotein (GP) from Epomops franqueti (Franquet's epauletted fruit bat).